Here is a 110-residue protein sequence, read N- to C-terminus: UPF0122 protein SPG_1182 (110 aa).

It belongs to the UPF0122 family.

Functionally, might take part in the signal recognition particle (SRP) pathway. This is inferred from the conservation of its genetic proximity to ftsY/ffh. May be a regulatory protein. This Streptococcus pneumoniae serotype 19F (strain G54) protein is UPF0122 protein SPG_1182.